A 668-amino-acid polypeptide reads, in one-letter code: Threonine--tRNA ligase (668 aa).

A TGS domain is found at 1-61 (MSDLKIALTH…ADGDQVEPVA (61 aa)). The catalytic stretch occupies residues 265–564 (DHRKLGRDLD…LVEHYAGAFP (300 aa)). Zn(2+)-binding residues include Cys358, His409, and His541.

The protein belongs to the class-II aminoacyl-tRNA synthetase family. In terms of assembly, homodimer. The cofactor is Zn(2+).

It is found in the cytoplasm. It catalyses the reaction tRNA(Thr) + L-threonine + ATP = L-threonyl-tRNA(Thr) + AMP + diphosphate + H(+). In terms of biological role, catalyzes the attachment of threonine to tRNA(Thr) in a two-step reaction: L-threonine is first activated by ATP to form Thr-AMP and then transferred to the acceptor end of tRNA(Thr). Also edits incorrectly charged L-seryl-tRNA(Thr). In Nocardioides sp. (strain ATCC BAA-499 / JS614), this protein is Threonine--tRNA ligase.